The chain runs to 415 residues: MLTEINFDGIIGPTHNYAGLSRGNIASASHAGDVSQPRAAALQGIDKMRHNLVLGLPQGFFVPLDRPDAPWLAALGTSVEKAEGHLRAQAWSASSMWAANAATVSPAPDSADGKCHLTVANLVTMPHRSHEWPGTLAQLRLAFAHPAFSVHPPVPAPFGDEGAANHMRLCSGHDRVGVEIFVYGVAGGRFPARQHLDASKAIARRHRLDPARTLFIRQSDTAIQGGAFHNDVVAVANEHVLFTHETAFEDREAAHAEIRAAFPAVEIVEVPASAVSLAHAIKSYLFNAQLVTLPEGGMGLVLPTEAHETPAVWNWLEAMIVGNGPIRRLFPVDVRQSMANGGGPACLRLRVVADPATVDPRFLADEAKLDRIAGVVAKHWPEAIAPADLASTTLLHDVRRARLALLDALDLSELG.

Substrate is bound by residues 18 to 27 (AGLSRGNIAS), N100, and 127 to 128 (HR). E161 is an active-site residue. Residue R193 coordinates substrate. The active site involves H229. 2 residues coordinate substrate: D231 and N340. C346 (nucleophile) is an active-site residue.

Belongs to the succinylarginine dihydrolase family. In terms of assembly, homodimer.

It carries out the reaction N(2)-succinyl-L-arginine + 2 H2O + 2 H(+) = N(2)-succinyl-L-ornithine + 2 NH4(+) + CO2. It functions in the pathway amino-acid degradation; L-arginine degradation via AST pathway; L-glutamate and succinate from L-arginine: step 2/5. Its function is as follows. Catalyzes the hydrolysis of N(2)-succinylarginine into N(2)-succinylornithine, ammonia and CO(2). This chain is N-succinylarginine dihydrolase, found in Sphingopyxis alaskensis (strain DSM 13593 / LMG 18877 / RB2256) (Sphingomonas alaskensis).